Consider the following 459-residue polypeptide: Zeatin O-glucosyltransferase (459 aa).

Histidine 26 acts as the Proton acceptor in catalysis. Histidine 26 is a binding site for an anthocyanidin. Aspartate 125 functions as the Charge relay in the catalytic mechanism. Positions 148, 335, 337, 352, 355, 356, 357, 360, 376, and 377 each coordinate UDP-alpha-D-glucose.

Belongs to the UDP-glycosyltransferase family.

It catalyses the reaction trans-zeatin + UDP-alpha-D-glucose = O-beta-D-glucosyl-trans-zeatin + UDP + H(+). Its function is as follows. May regulate active versus storage forms of cytokinins, and could have an impact on seed growth. Can also use UDP-xylose to catalyze the formation of O-xylosylzeatin but at much lower affinity. The chain is Zeatin O-glucosyltransferase from Phaseolus lunatus (Lima bean).